The following is a 282-amino-acid chain: Shikimate dehydrogenase (NADP(+)) (282 aa).

Shikimate-binding positions include S18–S20 and T65. The active-site Proton acceptor is K69. An NADP(+)-binding site is contributed by E81. N90 and D105 together coordinate shikimate. Residues G130–A134, N154–R159, and M222 each bind NADP(+). Shikimate is bound at residue Y224. G245 lines the NADP(+) pocket.

This sequence belongs to the shikimate dehydrogenase family. As to quaternary structure, homodimer.

It carries out the reaction shikimate + NADP(+) = 3-dehydroshikimate + NADPH + H(+). It participates in metabolic intermediate biosynthesis; chorismate biosynthesis; chorismate from D-erythrose 4-phosphate and phosphoenolpyruvate: step 4/7. Functionally, involved in the biosynthesis of the chorismate, which leads to the biosynthesis of aromatic amino acids. Catalyzes the reversible NADPH linked reduction of 3-dehydroshikimate (DHSA) to yield shikimate (SA). This is Shikimate dehydrogenase (NADP(+)) from Acidovorax sp. (strain JS42).